The following is a 337-amino-acid chain: DNA-directed RNA polymerase subunit alpha (337 aa).

The interval 1–233 (MVREDVVGST…DLLIPFLHAE (233 aa)) is alpha N-terminal domain (alpha-NTD). Positions 265 to 337 (KGIPLTCIFI…FAINLLNKKL (73 aa)) are alpha C-terminal domain (alpha-CTD).

Belongs to the RNA polymerase alpha chain family. In terms of assembly, in plastids the minimal PEP RNA polymerase catalytic core is composed of four subunits: alpha, beta, beta', and beta''. When a (nuclear-encoded) sigma factor is associated with the core the holoenzyme is formed, which can initiate transcription.

It localises to the plastid. Its subcellular location is the chloroplast. It carries out the reaction RNA(n) + a ribonucleoside 5'-triphosphate = RNA(n+1) + diphosphate. Functionally, DNA-dependent RNA polymerase catalyzes the transcription of DNA into RNA using the four ribonucleoside triphosphates as substrates. The polypeptide is DNA-directed RNA polymerase subunit alpha (Phalaenopsis aphrodite subsp. formosana (Moth orchid)).